Reading from the N-terminus, the 599-residue chain is MSDLSHIRNFSIIAHIDHGKSTLADRFIQMCGGLSDREMEAQVLDSMDLERERGITIKAHSVTLHYKAQDGKTYQLNFIDTPGHVDFTYEVSRSLAACEGALLVVDAGQGVEAQSVANCYTAIEQGLEVMPVLNKMDLPQAEPERVKEEIESIIGIDATDAVACSAKSGMGVLEVLERLVTAIPAPEGEIEAPLQALIIDSWFDNYLGVVSLVRVKNGRVKKGDKILVKSTGKVHQVDSVGVFTPKHTETVDLKAGEVGFIIAGIKDIHGAPVGDTLTLNNTPDVEVLPGFKRVKPQVYAGLFPVSSDDFEDFRDALQKLTLNDSSLQYEPESSEALGFGFRCGFLGMLHMEIIQERLEREYDLDLITTAPTVVFEIVQKNGEIIYVDNPSKLPDLASIQEMREPICRATILVPKDHLGNVITLCIEKRGVQRDMHFLSGQVQVVYDLPMNEVVLDFFDRLKSTSRGYASLDYSFDRFEPSNLVRLDVLINGEKVDALALIVHRDNAPYKGRQLVEKMKELIPRQMFDVAIQAAIGGQIIARSTVKALRKNVLAKCYGGDVSRKRKLLEKQKAGKKRMKQVGSVEIPQEAFLAVLKVDS.

The tr-type G domain maps to 5 to 187 (SHIRNFSIIA…RLVTAIPAPE (183 aa)). Residues 17 to 22 (DHGKST) and 134 to 137 (NKMD) each bind GTP.

It belongs to the TRAFAC class translation factor GTPase superfamily. Classic translation factor GTPase family. LepA subfamily.

It localises to the cell inner membrane. It carries out the reaction GTP + H2O = GDP + phosphate + H(+). In terms of biological role, required for accurate and efficient protein synthesis under certain stress conditions. May act as a fidelity factor of the translation reaction, by catalyzing a one-codon backward translocation of tRNAs on improperly translocated ribosomes. Back-translocation proceeds from a post-translocation (POST) complex to a pre-translocation (PRE) complex, thus giving elongation factor G a second chance to translocate the tRNAs correctly. Binds to ribosomes in a GTP-dependent manner. The sequence is that of Elongation factor 4 from Pseudomonas aeruginosa (strain LESB58).